Reading from the N-terminus, the 534-residue chain is Peptide chain release factor 3 (534 aa).

In terms of domain architecture, tr-type G spans 9–278; the sequence is ARRRTFAIIS…FFIEHAPPPQ (270 aa). GTP-binding positions include 18 to 25, 86 to 90, and 140 to 143; these read SHPDAGKT, DTPGH, and NKLD.

The protein belongs to the TRAFAC class translation factor GTPase superfamily. Classic translation factor GTPase family. PrfC subfamily.

It is found in the cytoplasm. Its function is as follows. Increases the formation of ribosomal termination complexes and stimulates activities of RF-1 and RF-2. It binds guanine nucleotides and has strong preference for UGA stop codons. It may interact directly with the ribosome. The stimulation of RF-1 and RF-2 is significantly reduced by GTP and GDP, but not by GMP. The polypeptide is Peptide chain release factor 3 (Xanthomonas oryzae pv. oryzae (strain PXO99A)).